The primary structure comprises 471 residues: Retinoic acid receptor RXR-beta-A (471 aa).

The tract at residues 1–34 is disordered; it reads MGDSRDSRSPDSSSVSSPPSGQRSPPLAPSAAAM. Residues 1-102 form a modulating region; the sequence is MGDSRDSRSP…HAVSSSDDVK (102 aa). Residues 10–25 show a composition bias toward low complexity; sequence PDSSSVSSPPSGQRSP. Residues 122-197 constitute a DNA-binding region (nuclear receptor); the sequence is KRLCAICGDR…MGMKREVVQD (76 aa). 2 NR C4-type zinc fingers span residues 125–145 and 161–185; these read CAIC…CEGC and CRDN…YQKC. Positions 196 to 216 are enriched in basic and acidic residues; sequence QDERQRSVQEERQRNKERDGE. Positions 196–226 are disordered; that stretch reads QDERQRSVQEERQRNKERDGEVESSSAANEE. Positions 198–221 are hinge; it reads ERQRSVQEERQRNKERDGEVESSS. Residues 224–467 form the NR LBD domain; it reads NEEMPVEKIL…TFLMEMLEAP (244 aa).

Belongs to the nuclear hormone receptor family. NR2 subfamily. Homodimer. Heterodimer; with a rar molecule. Binds DNA preferentially as a rar/rxr heterodimer. Heterodimerizes with rarga. Shows uniform expression from the blastula to mid-gastrula stages. At 12 hours post-fertilization (hpf), expressed ubiquitously but more weakly. At 24 hpf, restricted to the ventral diencephalon, pharangeal endoderm and trunk and tail mesoderm; mesoderm expression is in medial cells of each somite along the dorsoventral axis, forming stripes. At 48 hpf, expressed in forebrain, eye, midbrain and anterior hindbrain.

It is found in the nucleus. Its function is as follows. Receptor for retinoic acid. Retinoic acid receptors bind as heterodimers to their target response elements in response to their ligands, all-trans or 9-cis retinoic acid, and regulate gene expression in various biological processes. The rar/rxr heterodimers bind to the retinoic acid response elements (RARE) composed of tandem 5'-AGGTCA-3' sites known as DR1-DR5. The high affinity ligand for rxrs is 9-cis retinoic acid. This chain is Retinoic acid receptor RXR-beta-A (rxrba), found in Danio rerio (Zebrafish).